Reading from the N-terminus, the 176-residue chain is Small ribosomal subunit protein bS6 (176 aa).

The tract at residues 97-176 is disordered; it reads DQYTPNDSPP…VEPVDTTSEE (80 aa). A compositionally biased stretch (low complexity) spans 140-160; it reads AVETVEPPAEPAEPVEAVETV. Residues 161 to 176 show a composition bias toward acidic residues; the sequence is DTTEETVEPVDTTSEE.

Belongs to the bacterial ribosomal protein bS6 family.

Binds together with bS18 to 16S ribosomal RNA. The protein is Small ribosomal subunit protein bS6 of Gloeothece citriformis (strain PCC 7424) (Cyanothece sp. (strain PCC 7424)).